The following is a 57-amino-acid chain: uncharacterized protein (57 aa).

A disordered region spans residues 31-57; that stretch reads HHQTSSFNPMPSEVSLHTSHNFPHTTF. Polar residues predominate over residues 33–57; it reads QTSSFNPMPSEVSLHTSHNFPHTTF.

This is an uncharacterized protein from Invertebrate iridescent virus 6 (IIV-6).